The following is a 330-amino-acid chain: Polygalacturonase inhibitor (330 aa).

An N-terminal signal peptide occupies residues 1-24 (MELKFSTFLSLTLLFSSVLNPALS). 2 cysteine pairs are disulfide-bonded: Cys27–Cys57 and Cys58–Cys65. LRR repeat units lie at residues 69 to 92 (TNRI…LVGD), 93 to 118 (LPYL…IAKL), 119 to 141 (KGLK…FLSQ), 142 to 166 (LKNL…LSEL), 167 to 192 (PNLG…QFIG), 194 to 215 (VPDL…FAQM), and 217 to 237 (FTSI…IFGL). N-linked (GlcNAc...) asparagine glycosylation is found at Asn106, Asn130, Asn144, and Asn154. N-linked (GlcNAc...) asparagine glycans are attached at residues Asn238 and Asn254. LRR repeat units follow at residues 239-261 (KTTQ…VEFP), 262-285 (TSLT…FTQL), and 287-309 (FQFL…KLQS). An N-linked (GlcNAc...) asparagine glycan is attached at Asn291. 2 disulfide bridges follow: Cys298/Cys320 and Cys322/Cys329.

Belongs to the polygalacturonase-inhibiting protein family. Homodimer. N-linked glycosylated. As to expression, mostly expressed in fruits, and, to a lower extent, in flowers and leaves.

It is found in the secreted. The protein resides in the extracellular space. The protein localises to the apoplast. It localises to the cell wall. Its function is as follows. Inhibitor of fungal polygalacturonase. It is an important factor for plant resistance to phytopathogenic fungi. This chain is Polygalacturonase inhibitor (PGIP), found in Pyrus communis (Pear).